We begin with the raw amino-acid sequence, 386 residues long: Aspartate carbamoyltransferase 1, chloroplastic (386 aa).

The N-terminal 39 residues, 1–39, are a transit peptide targeting the chloroplast; the sequence is MTVASMLSSNSMNVGVSNPKMSSKTSACCLLNRPWPSSC. Carbamoyl phosphate-binding residues include Arg-132 and Thr-133. Residues Arg-132 and Thr-133 each coordinate UMP. L-aspartate is bound at residue Lys-162. Carbamoyl phosphate contacts are provided by Arg-183, His-211, and Gln-214. Arg-183 and His-211 together coordinate UMP. Residues Arg-244 and Arg-306 each contribute to the UMP site. Arg-244 and Arg-306 together coordinate L-aspartate. Residues Leu-346 and Pro-347 each coordinate carbamoyl phosphate.

The protein belongs to the aspartate/ornithine carbamoyltransferase superfamily. ATCase family. In terms of assembly, homotrimer.

It is found in the plastid. It localises to the chloroplast. The enzyme catalyses carbamoyl phosphate + L-aspartate = N-carbamoyl-L-aspartate + phosphate + H(+). Its pathway is pyrimidine metabolism; UMP biosynthesis via de novo pathway; (S)-dihydroorotate from bicarbonate: step 2/3. Feedback inhibited by UMP. Its function is as follows. Catalyzes the condensation of carbamoyl phosphate and aspartate to form carbamoyl aspartate and inorganic phosphate, the committed step in the de novo pyrimidine nucleotide biosynthesis pathway. The protein is Aspartate carbamoyltransferase 1, chloroplastic (PYRB1) of Pisum sativum (Garden pea).